We begin with the raw amino-acid sequence, 60 residues long: Large ribosomal subunit protein bL33 (60 aa).

This sequence belongs to the bacterial ribosomal protein bL33 family.

The chain is Large ribosomal subunit protein bL33 from Flavobacterium psychrophilum (strain ATCC 49511 / DSM 21280 / CIP 103535 / JIP02/86).